A 218-amino-acid polypeptide reads, in one-letter code: Large ribosomal subunit protein uL3 (218 aa).

It belongs to the universal ribosomal protein uL3 family. In terms of assembly, part of the 50S ribosomal subunit. Forms a cluster with proteins L14 and L19.

Its function is as follows. One of the primary rRNA binding proteins, it binds directly near the 3'-end of the 23S rRNA, where it nucleates assembly of the 50S subunit. The protein is Large ribosomal subunit protein uL3 of Rhodococcus jostii (strain RHA1).